A 438-amino-acid chain; its full sequence is uncharacterized protein (438 aa).

The N-terminal stretch at Met-1–Ala-19 is a signal peptide.

This is an uncharacterized protein from Rickettsia conorii (strain ATCC VR-613 / Malish 7).